The primary structure comprises 198 residues: dTTP/UTP pyrophosphatase (198 aa).

D72 acts as the Proton acceptor in catalysis.

The protein belongs to the Maf family. YhdE subfamily. A divalent metal cation serves as cofactor.

It is found in the cytoplasm. The enzyme catalyses dTTP + H2O = dTMP + diphosphate + H(+). It carries out the reaction UTP + H2O = UMP + diphosphate + H(+). Functionally, nucleoside triphosphate pyrophosphatase that hydrolyzes dTTP and UTP. May have a dual role in cell division arrest and in preventing the incorporation of modified nucleotides into cellular nucleic acids. The sequence is that of dTTP/UTP pyrophosphatase from Pseudomonas fluorescens (strain Pf0-1).